A 166-amino-acid polypeptide reads, in one-letter code: Lipoprotein signal peptidase (166 aa).

Helical transmembrane passes span 9–29, 45–65, 71–91, and 100–120; these read ASGA…FDQL, ALTS…FGFL, WQRW…CFLL, and FSLS…DRLV. Active-site residues include Asp-126 and Asp-144. Residues 135 to 155 traverse the membrane as a helical segment; sequence WHFPAFNLADSAITIGAVLLV.

The protein belongs to the peptidase A8 family.

It is found in the cell inner membrane. The catalysed reaction is Release of signal peptides from bacterial membrane prolipoproteins. Hydrolyzes -Xaa-Yaa-Zaa-|-(S,diacylglyceryl)Cys-, in which Xaa is hydrophobic (preferably Leu), and Yaa (Ala or Ser) and Zaa (Gly or Ala) have small, neutral side chains.. It participates in protein modification; lipoprotein biosynthesis (signal peptide cleavage). Its function is as follows. This protein specifically catalyzes the removal of signal peptides from prolipoproteins. The sequence is that of Lipoprotein signal peptidase from Burkholderia ambifaria (strain ATCC BAA-244 / DSM 16087 / CCUG 44356 / LMG 19182 / AMMD) (Burkholderia cepacia (strain AMMD)).